Here is a 440-residue protein sequence, read N- to C-terminus: MAHVIDFKEAGFDSVLDELEWRGLISQSTDRDRLAHTLNGEPVHYYCGFDPTAPSLHIGNLVQLIIMRHLQEAGHHPIALVGGATGLIGDPRQSGERILNPKDIVEQWCERLRIQIGGILEQEGSNPVTFVSNYDWTATMNVLDFLRDIGKNFRVGTMISKDIVARRLNSEEGISFTEFSYQVLQGNDYLYLYDHYDCVLELGGSDQWGNLTSGLDLIHKVRGVNVNVMASPIITDANGKKFGKSEGNAVWLDPNMLSVYKFYQFWLNRPDVEMASLLKAFTFLPKAEIERLVEATDTNPGAREAQRVLAWEVTSLVHGDEPTRKAIDASASLFGRGGDLADIDLETLESVLDGLKVENEAGEKVFAQALPGDRIAQAGVSAGLFKSISEARKTIKSGGVYVNNVRVEDEEQLLGDGDFLKGRFVVLRRGKKALGVVARS.

Residue Tyr-46 coordinates L-tyrosine. Residues 51–60 carry the 'HIGH' region motif; the sequence is PTAPSLHIGN. L-tyrosine is bound by residues Tyr-181 and Gln-185. Positions 241-245 match the 'KMSKS' region motif; the sequence is KFGKS. An ATP-binding site is contributed by Lys-244. The S4 RNA-binding domain maps to 373-430; it reads DRIAQAGVSAGLFKSISEARKTIKSGGVYVNNVRVEDEEQLLGDGDFLKGRFVVLRRG.

The protein belongs to the class-I aminoacyl-tRNA synthetase family. TyrS type 1 subfamily. In terms of assembly, homodimer.

It is found in the cytoplasm. The enzyme catalyses tRNA(Tyr) + L-tyrosine + ATP = L-tyrosyl-tRNA(Tyr) + AMP + diphosphate + H(+). Functionally, catalyzes the attachment of tyrosine to tRNA(Tyr) in a two-step reaction: tyrosine is first activated by ATP to form Tyr-AMP and then transferred to the acceptor end of tRNA(Tyr). This chain is Tyrosine--tRNA ligase, found in Bifidobacterium animalis subsp. lactis (strain AD011).